The primary structure comprises 131 residues: Small ribosomal subunit protein uS9 (131 aa).

It belongs to the universal ribosomal protein uS9 family.

This Actinobacillus pleuropneumoniae serotype 7 (strain AP76) protein is Small ribosomal subunit protein uS9.